The primary structure comprises 418 residues: Vasopressin V1a receptor (418 aa).

Low complexity predominate over residues 1–15 (MRFSGSPSPGPSNSS). Positions 1–20 (MRFSGSPSPGPSNSSRWWPL) are disordered. Over 1–51 (MRFSGSPSPGPSNSSRWWPLDAGDANTSGDLAGLGEDGGPQADTRNEELAK) the chain is Extracellular. Residues asparagine 13 and asparagine 26 are each glycosylated (N-linked (GlcNAc...) asparagine). A helical membrane pass occupies residues 52-75 (LEIAVLAVIFVVAVLGNSSVLLAL). Residues 76–87 (HRTPRKTSRMHL) are Cytoplasmic-facing. A helical transmembrane segment spans residues 88–109 (FIRHLSLADLAVAFFQVLPQLG). The Extracellular segment spans residues 110–124 (WDITYRFRGPDGLCR). A disulfide bridge connects residues cysteine 123 and cysteine 202. The helical transmembrane segment at 125 to 146 (VVKHMQVFAMFASAYMLVVMTA) threads the bilayer. The Cytoplasmic segment spans residues 147–167 (DRYIAVCHPLKTLQQPARRSR). The chain crosses the membrane as a helical span at residues 168–189 (LMIAAAWVLSFVLSTPQYFVFS). At 190–217 (MVEVSNVTKTYDCWANFIHPWGLPAYVT) the chain is on the extracellular side. A glycan (N-linked (GlcNAc...) asparagine) is linked at asparagine 195. Residues 218-238 (WMTGSVFVAPVVILGTCYGFI) form a helical membrane-spanning segment. Over 239–293 (CYHIWRKVRGKTAGRQGGPAEGAGESALYRGVLHARCVSSVKTISRAKIRTVKMT) the chain is Cytoplasmic. Residues 294–313 (FVIVTAYIVCWAPFFIIQMW) form a helical membrane-spanning segment. Topologically, residues 314–331 (SAWDKNFSWVESENPATA) are extracellular. The N-linked (GlcNAc...) asparagine glycan is linked to asparagine 319. The chain crosses the membrane as a helical span at residues 332 to 351 (IPALLASLNSCCNPWIYMFF). At 352–418 (SGHLLQDCAQ…KSIKFIPVST (67 aa)) the chain is on the cytoplasmic side. 2 S-palmitoyl cysteine lipidation sites follow: cysteine 365 and cysteine 366. Residues 377–418 (GSDSMSRRQTSFTNNRSPTNSMGTWKDSPKSSKSIKFIPVST) are disordered. The span at 383 to 399 (RRQTSFTNNRSPTNSMG) shows a compositional bias: polar residues. Serine 404 bears the Phosphoserine mark.

It belongs to the G-protein coupled receptor 1 family. Vasopressin/oxytocin receptor subfamily.

It localises to the cell membrane. Its function is as follows. Receptor for arginine vasopressin. The activity of this receptor is mediated by G proteins which activate a phosphatidyl-inositol-calcium second messenger system. The polypeptide is Vasopressin V1a receptor (AVPR1A) (Ovis aries (Sheep)).